Consider the following 309-residue polypeptide: Metaxin-3 (309 aa).

A disordered region spans residues 274–309; it reads MDDNLRRSPQNRPQKLSTLKPVGGAENSHSSDLLSH. Composition is skewed to polar residues over residues 280–290 and 300–309; these read RSPQNRPQKLS and NSHSSDLLSH.

It belongs to the metaxin family. As to quaternary structure, part of a large protein complex spanning both mitochondrial membranes termed the mitochondrial intermembrane space bridging (MIB) complex.

The protein localises to the mitochondrion. It is found in the mitochondrion outer membrane. Could function in transport of proteins into the mitochondrion. The sequence is that of Metaxin-3 (mtx3) from Xenopus laevis (African clawed frog).